The primary structure comprises 711 residues: Polyribonucleotide nucleotidyltransferase (711 aa).

The FFRR loop; important for RNA binding stretch occupies residues 77 to 80; that stretch reads FFRR. The tract at residues 327–331 is interaction with RNase E; sequence LDVRT. Mg(2+)-binding residues include Asp486 and Asp492. The region spanning 553 to 612 is the KH domain; sequence PRIHTIKINPDKIKDVIGKGGSVIRALTEETGTTIEIEDDGTVKIAATDGEKAKHAIRRI. In terms of domain architecture, S1 motif spans 622–690; the sequence is GRVYTGKVTR…RQGRIRLSIK (69 aa). Residues 689-711 form a disordered region; sequence IKEATEQSQPAAAPEAPAAEQGE. The span at 694-711 shows a compositional bias: low complexity; that stretch reads EQSQPAAAPEAPAAEQGE.

The protein belongs to the polyribonucleotide nucleotidyltransferase family. As to quaternary structure, component of the RNA degradosome, which is a multiprotein complex involved in RNA processing and mRNA degradation. Interacts with RNase E (rne). Homotrimer. The homotrimer forms a ring-like structure with a central channel, where RNA molecules can bind. RNA molecules bind between neighboring subunits. Might interact with YicC. Requires Mg(2+) as cofactor. Mn(2+) is required as a cofactor.

It localises to the cytoplasm. The catalysed reaction is RNA(n+1) + phosphate = RNA(n) + a ribonucleoside 5'-diphosphate. In terms of biological role, involved in mRNA degradation. Catalyzes the phosphorolysis of single-stranded polyribonucleotides processively in the 3'- to 5'-direction. Also involved, along with RNase II, in tRNA processing. RNases II and R contribute to rRNA degradation during starvation, while RNase R and PNPase are the major contributors to quality control of rRNA during steady state growth. Contributes to degradation of some small RNAs (sRNA). This is Polyribonucleotide nucleotidyltransferase from Escherichia coli (strain K12).